Here is a 211-residue protein sequence, read N- to C-terminus: Proteasome subunit beta 2 (211 aa).

Residues 1–17 (MVIMGNELQLENKILKG) constitute a propeptide, removed in mature form; by autocatalysis. T18 acts as the Nucleophile in catalysis.

It belongs to the peptidase T1B family. As to quaternary structure, the 20S proteasome core is composed of 14 alpha and 14 beta subunits that assemble into four stacked heptameric rings, resulting in a barrel-shaped structure. The two inner rings, each composed of seven catalytic beta subunits, are sandwiched by two outer rings, each composed of seven alpha subunits. The catalytic chamber with the active sites is on the inside of the barrel. Has a gated structure, the ends of the cylinder being occluded by the N-termini of the alpha-subunits. Is capped at one or both ends by the proteasome regulatory ATPase, PAN.

The protein resides in the cytoplasm. It carries out the reaction Cleavage of peptide bonds with very broad specificity.. Its activity is regulated as follows. The formation of the proteasomal ATPase PAN-20S proteasome complex, via the docking of the C-termini of PAN into the intersubunit pockets in the alpha-rings, triggers opening of the gate for substrate entry. Interconversion between the open-gate and close-gate conformations leads to a dynamic regulation of the 20S proteasome proteolysis activity. Component of the proteasome core, a large protease complex with broad specificity involved in protein degradation. The chain is Proteasome subunit beta 2 from Saccharolobus solfataricus (strain 98/2) (Sulfolobus solfataricus).